Consider the following 752-residue polypeptide: Photosystem I P700 chlorophyll a apoprotein A1 (752 aa).

8 helical membrane passes run 73 to 96 (IFSA…FHGA), 159 to 182 (LYAT…FHYH), 198 to 222 (MNHH…HISI), 294 to 312 (TAHH…GHMY), 349 to 372 (WHAQ…HHMY), 388 to 414 (LSLF…IFMV), 436 to 458 (AIIS…LYIH), and 533 to 551 (FMVH…LILV). Residues C575 and C584 each coordinate [4Fe-4S] cluster. The next 2 membrane-spanning stretches (helical) occupy residues 591–612 (HVFL…HFSW) and 666–688 (LSAY…MFLF). Residue H677 participates in chlorophyll a' binding. Residues M685 and Y693 each coordinate chlorophyll a. W694 serves as a coordination point for phylloquinone. The helical transmembrane segment at 726–746 (AVGVAHYLLGGIGTTWAFFLA) threads the bilayer.

The protein belongs to the PsaA/PsaB family. The PsaA/B heterodimer binds the P700 chlorophyll special pair and subsequent electron acceptors. PSI consists of a core antenna complex that captures photons, and an electron transfer chain that converts photonic excitation into a charge separation. The eukaryotic PSI reaction center is composed of at least 11 subunits. It depends on P700 is a chlorophyll a/chlorophyll a' dimer, A0 is one or more chlorophyll a, A1 is one or both phylloquinones and FX is a shared 4Fe-4S iron-sulfur center. as a cofactor.

The protein resides in the plastid. The protein localises to the chloroplast thylakoid membrane. It catalyses the reaction reduced [plastocyanin] + hnu + oxidized [2Fe-2S]-[ferredoxin] = oxidized [plastocyanin] + reduced [2Fe-2S]-[ferredoxin]. Its function is as follows. PsaA and PsaB bind P700, the primary electron donor of photosystem I (PSI), as well as the electron acceptors A0, A1 and FX. PSI is a plastocyanin/cytochrome c6-ferredoxin oxidoreductase, converting photonic excitation into a charge separation, which transfers an electron from the donor P700 chlorophyll pair to the spectroscopically characterized acceptors A0, A1, FX, FA and FB in turn. Oxidized P700 is reduced on the lumenal side of the thylakoid membrane by plastocyanin or cytochrome c6. The protein is Photosystem I P700 chlorophyll a apoprotein A1 of Gracilaria tenuistipitata var. liui (Red alga).